A 343-amino-acid chain; its full sequence is MDRIIDSAATREDEAIEVSIRPKRLADYLGQQPVREQMDIYIQATKARAEALDHVLIFGPPGLGKTTLSHVIAYELGVKLRVTSGPVIEKAGDLAALLTNLQPYDVLFIDEIHRLSPVVEEVLYPAMEDFQIDIMIGEGPAARSIKIDLPPFTLIGATTRTGLLTAPLRDRFGIVQRLEFYSPEDLARIVRRSAGILNIDCTTEGAAEIAQRARGTPRIANRLLRRVRDYAEVKADGQITIEVAQAAMQMLKVDQGGFDELDRRLLHTIVEYFDGGPVGIESLAASLSEERGTLEDVVEPYLIQQGFLVRTARGRMATDKAYQHLALQPRERVSAFTDPEDLF.

The large ATPase domain (RuvB-L) stretch occupies residues 1-181 (MDRIIDSAAT…FGIVQRLEFY (181 aa)). Residues isoleucine 20, arginine 21, glycine 62, lysine 65, threonine 66, threonine 67, 128–130 (EDF), arginine 171, tyrosine 181, and arginine 218 each bind ATP. Position 66 (threonine 66) interacts with Mg(2+). The small ATPAse domain (RuvB-S) stretch occupies residues 182 to 252 (SPEDLARIVR…VAQAAMQMLK (71 aa)). Positions 255–343 (QGGFDELDRR…SAFTDPEDLF (89 aa)) are head domain (RuvB-H). Positions 291, 310, and 315 each coordinate DNA.

Belongs to the RuvB family. As to quaternary structure, homohexamer. Forms an RuvA(8)-RuvB(12)-Holliday junction (HJ) complex. HJ DNA is sandwiched between 2 RuvA tetramers; dsDNA enters through RuvA and exits via RuvB. An RuvB hexamer assembles on each DNA strand where it exits the tetramer. Each RuvB hexamer is contacted by two RuvA subunits (via domain III) on 2 adjacent RuvB subunits; this complex drives branch migration. In the full resolvosome a probable DNA-RuvA(4)-RuvB(12)-RuvC(2) complex forms which resolves the HJ.

The protein resides in the cytoplasm. The enzyme catalyses ATP + H2O = ADP + phosphate + H(+). The RuvA-RuvB-RuvC complex processes Holliday junction (HJ) DNA during genetic recombination and DNA repair, while the RuvA-RuvB complex plays an important role in the rescue of blocked DNA replication forks via replication fork reversal (RFR). RuvA specifically binds to HJ cruciform DNA, conferring on it an open structure. The RuvB hexamer acts as an ATP-dependent pump, pulling dsDNA into and through the RuvAB complex. RuvB forms 2 homohexamers on either side of HJ DNA bound by 1 or 2 RuvA tetramers; 4 subunits per hexamer contact DNA at a time. Coordinated motions by a converter formed by DNA-disengaged RuvB subunits stimulates ATP hydrolysis and nucleotide exchange. Immobilization of the converter enables RuvB to convert the ATP-contained energy into a lever motion, pulling 2 nucleotides of DNA out of the RuvA tetramer per ATP hydrolyzed, thus driving DNA branch migration. The RuvB motors rotate together with the DNA substrate, which together with the progressing nucleotide cycle form the mechanistic basis for DNA recombination by continuous HJ branch migration. Branch migration allows RuvC to scan DNA until it finds its consensus sequence, where it cleaves and resolves cruciform DNA. The sequence is that of Holliday junction branch migration complex subunit RuvB from Xylella fastidiosa (strain Temecula1 / ATCC 700964).